Here is a 326-residue protein sequence, read N- to C-terminus: Hairy/enhancer-of-split related with YRPW motif-like protein (326 aa).

Residues 1-56 (MKRPRAPSGSDGESDGPIDVGQENDLSQMARPLTTPSPSQMQARKKRRGIIEKRRR) are disordered. The interval 42 to 111 (QARKKRRGII…GGTGFFDARA (70 aa)) is transcriptional repression and interaction with NCOR1 and SIN3A. Positions 43 to 98 (ARKKRRGIIEKRRRDRINSSLSELRRLVPTAFEKQGSSKLEKAEVLQMTVDHLKML) constitute a bHLH domain. Residues 116–153 (FRSIGFRECLTEVIRYLGVLEGPSSHADPVRIRLLSHL) enclose the Orange domain. 2 disordered regions span residues 223-260 (HRPAGTIPPTRRNLLPSRGVTSTQRAHLPERPAAPPPT) and 272-306 (PIPPCSPTTAPGAGKSDDNVSGSISSPCPSGPTGR). Over residues 292–305 (SGSISSPCPSGPTG) the composition is skewed to low complexity.

It belongs to the HEY family. Interacts with HES1, HDAC1, NCOR1 and SIN3A. Self-associates. Interacts with GATA4, GATA6, HEY1 and HEY2. As to expression, expressed in heart and at lower levels in brain, lung, muscle, ovary and testis.

It is found in the nucleus. Its function is as follows. Transcriptional repressor which binds preferentially to the canonical E box sequence 5'-CACGTG-3'. Downstream effector of Notch signaling required for cardiovascular development. Specifically required for the Notch-induced endocardial epithelial to mesenchymal transition, which is itself criticial for cardiac valve and septum development. Represses transcription by the cardiac transcriptional activators GATA4 and GATA6. This is Hairy/enhancer-of-split related with YRPW motif-like protein (Heyl) from Mus musculus (Mouse).